The sequence spans 421 residues: MDKLIITGGVRLDGEIRISGAKNSALPILAATLLADGPVTVQNLPHLHDITTMIELFGRMGIEPVIDEKLSVEIDPRTIKTLVAPYELVKTMRASILVLGPMVARFGEAEVALPGGCAIGSRPVDLHIRGLEAMGAIIDVEGGYIKAKAPEGGLRGANFFFDTVSVTGTENIMMAASLANGRSVLQNAAREPEVVDLANFLIAMGAKIHGAGTDTITIDGVKRLGPATYKVMPDRIETGTYLVAAAVTGGRVKVKDTDPTILEAVLLKLQEAGAEVTTGEDWIELNMHGKRPKAVNVRTAPYPAFPTDMQAQFISLNAIAEGTGAVIETIFENRFMHVYEMHRMGAQIQVEGNTAIVTGTEVLKGAPVMATDLRASASLVISALVAQGDTLIDRIYHIDRGYECIEEKLQMLGAKIRRVPG.

22–23 (KN) is a binding site for phosphoenolpyruvate. Arg93 provides a ligand contact to UDP-N-acetyl-alpha-D-glucosamine. Residue Cys117 is the Proton donor of the active site. Cys117 carries the post-translational modification 2-(S-cysteinyl)pyruvic acid O-phosphothioketal. UDP-N-acetyl-alpha-D-glucosamine is bound by residues 122 to 126 (RPVDL), Asp308, and Ile330.

Belongs to the EPSP synthase family. MurA subfamily.

Its subcellular location is the cytoplasm. The catalysed reaction is phosphoenolpyruvate + UDP-N-acetyl-alpha-D-glucosamine = UDP-N-acetyl-3-O-(1-carboxyvinyl)-alpha-D-glucosamine + phosphate. It functions in the pathway cell wall biogenesis; peptidoglycan biosynthesis. In terms of biological role, cell wall formation. Adds enolpyruvyl to UDP-N-acetylglucosamine. This Pseudomonas savastanoi pv. phaseolicola (strain 1448A / Race 6) (Pseudomonas syringae pv. phaseolicola (strain 1448A / Race 6)) protein is UDP-N-acetylglucosamine 1-carboxyvinyltransferase.